The primary structure comprises 501 residues: Serine/threonine-protein kinase pelle (501 aa).

The interval 1–25 (MSGVQTAEAEAQAQNQANGNRTRSR) is disordered. A compositionally biased stretch (low complexity) spans 7–18 (AEAEAQAQNQAN). Residues 55-121 (WQQLATAVKL…NAMRLIKDYV (67 aa)) enclose the Death domain. Residues 144–176 (DSSAKVNNGPPFPSSSGVSNSNNNRTSTTATEE) form a disordered region. The segment covering 149-167 (VNNGPPFPSSSGVSNSNNN) has biased composition (low complexity). The Protein kinase domain maps to 213 to 499 (WSPDNRLGQG…AVLKRFEPFV (287 aa)). ATP-binding positions include 219 to 227 (LGQGGFGDV) and Lys-240. Residue Asp-346 is the Proton acceptor of the active site. ATP contacts are provided by residues 348–351 (KPAN) and Asp-364.

The protein belongs to the protein kinase superfamily. TKL Ser/Thr protein kinase family. Pelle subfamily. Interacts (via Death domain) with tub (via Death domain). Interacts with Pellino (Pli).

The protein localises to the cell membrane. It is found in the cytoplasm. It catalyses the reaction L-seryl-[protein] + ATP = O-phospho-L-seryl-[protein] + ADP + H(+). The catalysed reaction is L-threonyl-[protein] + ATP = O-phospho-L-threonyl-[protein] + ADP + H(+). In terms of biological role, plays an essential role in the Tl receptor signaling pathway that establishes embryonic dorsoventral polarity; the signal directs import of dl into ventral and ventrolateral nuclei, thereby establishing dorsoventral polarity. Tub recruits pll to the plasma membrane and protein-protein interaction activates pll. The chain is Serine/threonine-protein kinase pelle (pll) from Drosophila melanogaster (Fruit fly).